We begin with the raw amino-acid sequence, 452 residues long: Flavin-containing monooxygenase FMO GS-OX-like 4 (452 aa).

Residue 17 to 22 (GAGAAG) coordinates FAD. Residue 217 to 222 (GNSASA) participates in NADP(+) binding.

This sequence belongs to the FMO family. The cofactor is FAD.

Functionally, catalyzes the conversion of methylthioalkyl glucosinolates of any chain length into methylsulfinylalkyl glucosinolates. The chain is Flavin-containing monooxygenase FMO GS-OX-like 4 from Arabidopsis thaliana (Mouse-ear cress).